The sequence spans 73 residues: Putative membrane protein insertion efficiency factor (73 aa).

It belongs to the UPF0161 family.

It localises to the cell inner membrane. In terms of biological role, could be involved in insertion of integral membrane proteins into the membrane. This Rickettsia bellii (strain OSU 85-389) protein is Putative membrane protein insertion efficiency factor.